Here is a 1019-residue protein sequence, read N- to C-terminus: StAR-related lipid transfer protein 8 (1019 aa).

Disordered regions lie at residues 92–122 (QPLLGLVPSPSNQPFLSPPQGQEGSQDKVKK) and 134–154 (SLRRKEKGDSRQTEPEQCLAT). Polar residues predominate over residues 100-115 (SPSNQPFLSPPQGQEG). Serine 108 is modified (phosphoserine). Positions 134–147 (SLRRKEKGDSRQTE) are enriched in basic and acidic residues. An Asymmetric dimethylarginine modification is found at arginine 168. Phosphoserine is present on residues serine 234 and serine 237. 2 disordered regions span residues 325-355 (MYPDLRPGDKEEEEEEEEEEEEATSSVEVAT) and 406-482 (APAQ…VGAS). The segment covering 334-347 (KEEEEEEEEEEEEA) has biased composition (acidic residues). 2 stretches are compositionally biased toward polar residues: residues 418–430 (NSTAEPISASSLS) and 437–455 (ISDTAVSSSELDSSGNSMN). A phosphoserine mark is found at serine 494 and serine 502. In terms of domain architecture, Rho-GAP spans 569 to 773 (PPLIHVQRTG…HMISDCKKLF (205 aa)). The disordered stretch occupies residues 731–754 (DSSSPRIKSKRSLVGRPGPRDLSE). Residues 805-1013 (AQAAGVSLSL…RDSFPTLQAA (209 aa)) form the START domain.

Binds both the SH2 and PTB domains of TNS1.

The protein resides in the cell junction. The protein localises to the focal adhesion. Functionally, accelerates GTPase activity of RHOA and CDC42, but not RAC1. Stimulates the hydrolysis of phosphatidylinositol 4,5-bisphosphate by PLCD1. The sequence is that of StAR-related lipid transfer protein 8 (Stard8) from Mus musculus (Mouse).